The chain runs to 308 residues: Tetraacyldisaccharide 4'-kinase (308 aa).

63–70 (SFGGNGKT) provides a ligand contact to ATP.

This sequence belongs to the LpxK family.

The enzyme catalyses a lipid A disaccharide + ATP = a lipid IVA + ADP + H(+). It participates in glycolipid biosynthesis; lipid IV(A) biosynthesis; lipid IV(A) from (3R)-3-hydroxytetradecanoyl-[acyl-carrier-protein] and UDP-N-acetyl-alpha-D-glucosamine: step 6/6. In terms of biological role, transfers the gamma-phosphate of ATP to the 4'-position of a tetraacyldisaccharide 1-phosphate intermediate (termed DS-1-P) to form tetraacyldisaccharide 1,4'-bis-phosphate (lipid IVA). In Campylobacter jejuni (strain RM1221), this protein is Tetraacyldisaccharide 4'-kinase.